Here is a 290-residue protein sequence, read N- to C-terminus: 4-hydroxybenzoate octaprenyltransferase (290 aa).

7 helical membrane-spanning segments follow: residues 33–53 (LWALWVATPGVPPLWILAVFV), 99–119 (LFVVLVLLAFLLVLTLNTMTI), 141–161 (LPQVVLGAAFGWSIPMAFAAV), 163–183 (ESVPLSCWLMFLANILWAVAY), 213–233 (FIIGVLQIGVMVLMALIGWLN), 237–257 (WGYYWSILVAGGLFVYQQKLI), and 268–288 (AFMNNNYVGLVLFLGLAMSYW).

This sequence belongs to the UbiA prenyltransferase family. It depends on Mg(2+) as a cofactor.

It localises to the cell inner membrane. It carries out the reaction all-trans-octaprenyl diphosphate + 4-hydroxybenzoate = 4-hydroxy-3-(all-trans-octaprenyl)benzoate + diphosphate. It functions in the pathway cofactor biosynthesis; ubiquinone biosynthesis. Catalyzes the prenylation of para-hydroxybenzoate (PHB) with an all-trans polyprenyl group. Mediates the second step in the final reaction sequence of ubiquinone-8 (UQ-8) biosynthesis, which is the condensation of the polyisoprenoid side chain with PHB, generating the first membrane-bound Q intermediate 3-octaprenyl-4-hydroxybenzoate. This chain is 4-hydroxybenzoate octaprenyltransferase, found in Escherichia fergusonii (strain ATCC 35469 / DSM 13698 / CCUG 18766 / IAM 14443 / JCM 21226 / LMG 7866 / NBRC 102419 / NCTC 12128 / CDC 0568-73).